The primary structure comprises 428 residues: 3-phosphoshikimate 1-carboxyvinyltransferase (428 aa).

The 3-phosphoshikimate site is built by lysine 19, serine 20, and arginine 24. Residue lysine 19 participates in phosphoenolpyruvate binding. Phosphoenolpyruvate contacts are provided by glycine 91 and arginine 119. 3-phosphoshikimate-binding residues include serine 164, glutamine 166, aspartate 312, and lysine 339. Phosphoenolpyruvate is bound at residue glutamine 166. Aspartate 312 serves as the catalytic Proton acceptor. Residues arginine 343 and arginine 386 each coordinate phosphoenolpyruvate.

Belongs to the EPSP synthase family. As to quaternary structure, monomer.

It localises to the cytoplasm. It catalyses the reaction 3-phosphoshikimate + phosphoenolpyruvate = 5-O-(1-carboxyvinyl)-3-phosphoshikimate + phosphate. It functions in the pathway metabolic intermediate biosynthesis; chorismate biosynthesis; chorismate from D-erythrose 4-phosphate and phosphoenolpyruvate: step 6/7. Its function is as follows. Catalyzes the transfer of the enolpyruvyl moiety of phosphoenolpyruvate (PEP) to the 5-hydroxyl of shikimate-3-phosphate (S3P) to produce enolpyruvyl shikimate-3-phosphate and inorganic phosphate. The chain is 3-phosphoshikimate 1-carboxyvinyltransferase from Bacillus pumilus (strain SAFR-032).